Reading from the N-terminus, the 275-residue chain is COP9 signalosome complex subunit 7a (275 aa).

S2 is subject to N-acetylserine. Residues S2–G159 form the PCI domain. Residues L185–Q233 are a coiled coil. The segment at A228–N275 is disordered. Residues P235–E244 are compositionally biased toward basic and acidic residues. Over residues P254–G263 the composition is skewed to basic residues.

The protein belongs to the CSN7/EIF3M family. CSN7 subfamily. In terms of assembly, component of the CSN complex, composed of COPS1/GPS1, COPS2, COPS3, COPS4, COPS5, COPS6, COPS7 (COPS7A or COPS7B), COPS8 and COPS9. In the complex, it probably interacts directly with COPS1, COPS2, COPS4, COPS5, COPS6 and COPS8. Interacts with PMF1. Interacts with the translation initiation factor EIF3S6. Interacts with CK2 and PKD. Interacts directly with ID3. Post-translationally, phosphorylated by CK2 and PKD kinases.

The protein resides in the cytoplasm. It localises to the nucleus. Its function is as follows. Component of the COP9 signalosome complex (CSN), a complex involved in various cellular and developmental processes. The CSN complex is an essential regulator of the ubiquitin (Ubl) conjugation pathway by mediating the deneddylation of the cullin subunits of SCF-type E3 ligase complexes, leading to decrease the Ubl ligase activity of SCF-type complexes such as SCF, CSA or DDB2. The complex is also involved in phosphorylation of p53/TP53, JUN, I-kappa-B-alpha/NFKBIA, ITPK1 and IRF8/ICSBP, possibly via its association with CK2 and PKD kinases. CSN-dependent phosphorylation of TP53 and JUN promotes and protects degradation by the Ubl system, respectively. The polypeptide is COP9 signalosome complex subunit 7a (Cops7a) (Mus musculus (Mouse)).